The sequence spans 401 residues: Imidazolonepropionase (401 aa).

Residues His-66 and His-68 each contribute to the Fe(3+) site. Residues His-66 and His-68 each coordinate Zn(2+). 3 residues coordinate 4-imidazolone-5-propanoate: Arg-75, Tyr-138, and His-171. Tyr-138 is an N-formimidoyl-L-glutamate binding site. His-236 contributes to the Fe(3+) binding site. Residue His-236 coordinates Zn(2+). Gln-239 provides a ligand contact to 4-imidazolone-5-propanoate. Fe(3+) is bound at residue Asp-311. Residue Asp-311 coordinates Zn(2+). Asn-313 and Gly-315 together coordinate N-formimidoyl-L-glutamate. Residue Thr-316 coordinates 4-imidazolone-5-propanoate.

Belongs to the metallo-dependent hydrolases superfamily. HutI family. Zn(2+) serves as cofactor. Requires Fe(3+) as cofactor.

It is found in the cytoplasm. The catalysed reaction is 4-imidazolone-5-propanoate + H2O = N-formimidoyl-L-glutamate. Its pathway is amino-acid degradation; L-histidine degradation into L-glutamate; N-formimidoyl-L-glutamate from L-histidine: step 3/3. Functionally, catalyzes the hydrolytic cleavage of the carbon-nitrogen bond in imidazolone-5-propanoate to yield N-formimidoyl-L-glutamate. It is the third step in the universal histidine degradation pathway. This Pseudomonas putida (strain ATCC 47054 / DSM 6125 / CFBP 8728 / NCIMB 11950 / KT2440) protein is Imidazolonepropionase.